The following is a 367-amino-acid chain: o-succinylbenzoate synthase (367 aa).

Lysine 164 acts as the Proton donor in catalysis. Residues aspartate 189, glutamate 214, and aspartate 239 each coordinate Mg(2+). Lysine 263 serves as the catalytic Proton acceptor.

It belongs to the mandelate racemase/muconate lactonizing enzyme family. MenC type 2 subfamily. As to quaternary structure, homodimer. A divalent metal cation serves as cofactor.

It catalyses the reaction (1R,6R)-6-hydroxy-2-succinyl-cyclohexa-2,4-diene-1-carboxylate = 2-succinylbenzoate + H2O. The protein operates within quinol/quinone metabolism; 1,4-dihydroxy-2-naphthoate biosynthesis; 1,4-dihydroxy-2-naphthoate from chorismate: step 4/7. Its pathway is quinol/quinone metabolism; menaquinone biosynthesis. Functionally, converts 2-succinyl-6-hydroxy-2,4-cyclohexadiene-1-carboxylate (SHCHC) to 2-succinylbenzoate (OSB). Also acts as a N-succinylamino acid racemase (NSAR) that catalyzes the racemization of N-succinyl-L-phenylglycine. Since the gene is encoded in a menaquinone synthesis operon, OSB synthase is probably the physiological activity. A pathway that requires NSAR activity has not been identified in this species, so whether NSAR is also a biological activity is unknown. The chain is o-succinylbenzoate synthase from Enterococcus faecalis (strain ATCC 700802 / V583).